A 1362-amino-acid polypeptide reads, in one-letter code: Bromodomain-containing protein 4 (1362 aa).

The segment at 1-58 (MSAESGPGTRLRNLPVMGDGLETSQMSTTQAQAQPQPANAASTNPPPPETSNPNKPKR) is disordered. Residues 23-43 (TSQMSTTQAQAQPQPANAAST) are compositionally biased toward low complexity. Positions 58–164 (RQTNQLQYLL…KLFLQKINEL (107 aa)) constitute a Bromo 1 domain. A Glycyl lysine isopeptide (Lys-Gly) (interchain with G-Cter in SUMO2) cross-link involves residue lysine 99. Disordered stretches follow at residues 174 to 229 (VQAK…PAVT), 242 to 352 (VPPQ…KVSE), and 463 to 615 (EPVV…YEEK). Residues 197–211 (PNTTQASTPPQTQTP) are compositionally biased toward low complexity. Pro residues-rich tracts occupy residues 212-227 (QPNP…PFPA) and 243-266 (PPQP…PAPQ). Over residues 320–336 (QRRESSRPVKPPKKDVP) the composition is skewed to basic and acidic residues. Positions 348–457 (SKVSEQLKCC…DVFEMRFAKM (110 aa)) constitute a Bromo 2 domain. Position 470 is a phosphoserine (serine 470). The span at 478–497 (KVVAPPSSSDSSSDSSSDSD) shows a compositional bias: low complexity. Serine 484, serine 488, serine 492, serine 494, serine 498, serine 499, and serine 503 each carry phosphoserine; by CK2. The segment at 484 to 503 (SSSDSSSDSSSDSDSSTDDS) is NPS region. Residues 524-579 (QLAALSQPQQNKPKKKEKDKKEKKKEKHKRKEEVEENKKSKAKEPPPKKTKKNNSS) are BID region. Over residues 535–553 (KPKKKEKDKKEKKKEKHKR) the composition is skewed to basic residues. Residues 554 to 570 (KEEVEENKKSKAKEPPP) are compositionally biased toward basic and acidic residues. A Glycyl lysine isopeptide (Lys-Gly) (interchain with G-Cter in SUMO2) cross-link involves residue lysine 585. Positions 600–682 (ESEEEDKCKP…SCLRKKRKPQ (83 aa)) constitute an NET domain. At serine 601 the chain carries Phosphoserine. Residues 605–615 (DKCKPMSYEEK) are compositionally biased toward basic and acidic residues. Residues lysine 645 and lysine 694 each participate in a glycyl lysine isopeptide (Lys-Gly) (interchain with G-Cter in SUMO2) cross-link. The interval 674 to 1100 (CLRKKRKPQA…PKKQELRAAS (427 aa)) is disordered. The span at 699-712 (SSSESESSSESSSS) shows a compositional bias: low complexity. Residues 724–744 (KSKKKGHPGREQKKHHHHHHQ) are compositionally biased toward basic residues. 3 stretches are compositionally biased toward pro residues: residues 751-785 (APVP…PPSM), 833-846 (PELP…PEHS), and 881-890 (PPKPARPPAV). Residues 926–936 (MQMQLYLQQLQ) are compositionally biased toward low complexity. Composition is skewed to pro residues over residues 953–964 (QPPPPLPPPPHP), 973–996 (QPPP…PPRP), and 1010–1034 (QPPP…PQPA). Residues 1041–1050 (QHHHSPRHHK) are compositionally biased toward basic residues. The segment at 1047 to 1362 (RHHKSDPYST…LLSIFEENLF (316 aa)) is C-terminal (CTD) region. Lysine 1050 participates in a covalent cross-link: Glycyl lysine isopeptide (Lys-Gly) (interchain with G-Cter in SUMO2). The segment covering 1071–1091 (PQMSQFQSLTHQSPPQQNVQP) has biased composition (polar residues). Residue lysine 1111 is modified to N6-acetyllysine; alternate. A Glycyl lysine isopeptide (Lys-Gly) (interchain with G-Cter in SUMO1); alternate cross-link involves residue lysine 1111. A Glycyl lysine isopeptide (Lys-Gly) (interchain with G-Cter in SUMO2); alternate cross-link involves residue lysine 1111. The segment at 1116 to 1339 (HSPIIRSEPF…KREQERRRRE (224 aa)) is disordered. Serine 1117 and serine 1126 each carry phosphoserine. Over residues 1175 to 1196 (PDKDKQKQEPKTPVAPKKDLKI) the composition is skewed to basic and acidic residues. Residue lysine 1197 forms a Glycyl lysine isopeptide (Lys-Gly) (interchain with G-Cter in SUMO2) linkage. Serine 1201 and serine 1204 each carry phosphoserine. Residues 1211–1223 (TTPSSTAKSSSDS) are compositionally biased toward low complexity. Residues 1225 to 1284 (EQFRRAAREKEEREKALKAQAEHAEKEKERLRQERMRSREDEDALEQARRAHEEARRRQE) show a composition bias toward basic and acidic residues. Positions 1285–1313 (QQQQQRQEQQQQQQQQAAAVAAAATPQAQ) are enriched in low complexity. Positions 1323–1339 (QQRELARKREQERRRRE) are enriched in basic and acidic residues.

The protein belongs to the BET family. Interacts with p53/TP53; the interaction is direct. Interacts (via CTD region) with CDK9 and CCNT1, acting as an associated component of P-TEFb complex. Interacts with RELA (when acetylated at 'Lys-310'). Interacts (via NET domain) with NSD3, CHD4, BICRA and ATAD5. The interaction with BICRA bridges BRD4 to the GBAF complex. Interacts (via NET domain) with JMJD6 (via JmjC and N-terminal domains); the interaction is stronger in presence of ssRNA and recruits JMJD6 on distal enhancers. Interacts with NSD3. Interacts with NIPBL. In terms of assembly, interacts with SMC2. Interacts with NCAPD3. As to quaternary structure, (Microbial infection) Interacts with bovine papillomavirus type 1 regulatory protein E2. This interactions may serve for the tethering of viral genomes to host mitotic chromosomes allowing successful partitioning of the viral genome during cell division. (Microbial infection) Interacts with Epstein-Barr virus (EBV) protein EBNA1; this interaction facilitates transcriptional activation by EBNA1. In terms of assembly, (Microbial infection) Interacts with human herpes virus-8 (HHV-8) protein LANA. Post-translationally, phosphorylation by CK2 disrupt the intramolecular binding between the bromo domain 2 and the NPS region and promotes binding between the NPS and the BID regions, leading to activate the protein and promote binding to acetylated histones. In absence of phosphorylation, BRD4 does not localize to p53/TP53 target gene promoters, phosphorylation promoting recruitment to p53/TP53 target promoters. Ubiquitously expressed.

The protein localises to the nucleus. It is found in the chromosome. With respect to regulation, inhibited by JQ1, a thieno-triazolo-1,4-diazepine derivative, which specifically inhibits members of the BET family (BRD2, BRD3 and BRD4). The first bromo domain is inhibited by GSK778 (iBET-BD1), which specifically inhibits the first bromo domain of members of the BET family (BRD2, BRD3 and BRD4). The second bromo domain is inhibited by ABBV-744, which specifically inhibits the second bromo domain of members of the BET family (BRD2, BRD3 and BRD4). The second bromo domain is inhibited by GSK046 (iBET-BD2), which specifically inhibits the second bromo domain of members of the BET family (BRD2, BRD3 and BRD4). In terms of biological role, chromatin reader protein that recognizes and binds acetylated histones and plays a key role in transmission of epigenetic memory across cell divisions and transcription regulation. Remains associated with acetylated chromatin throughout the entire cell cycle and provides epigenetic memory for postmitotic G1 gene transcription by preserving acetylated chromatin status and maintaining high-order chromatin structure. During interphase, plays a key role in regulating the transcription of signal-inducible genes by associating with the P-TEFb complex and recruiting it to promoters. Also recruits P-TEFb complex to distal enhancers, so called anti-pause enhancers in collaboration with JMJD6. BRD4 and JMJD6 are required to form the transcriptionally active P-TEFb complex by displacing negative regulators such as HEXIM1 and 7SKsnRNA complex from P-TEFb, thereby transforming it into an active form that can then phosphorylate the C-terminal domain (CTD) of RNA polymerase II. Regulates differentiation of naive CD4(+) T-cells into T-helper Th17 by promoting recruitment of P-TEFb to promoters. Promotes phosphorylation of 'Ser-2' of the C-terminal domain (CTD) of RNA polymerase II. According to a report, directly acts as an atypical protein kinase and mediates phosphorylation of 'Ser-2' of the C-terminal domain (CTD) of RNA polymerase II; these data however need additional evidences in vivo. In addition to acetylated histones, also recognizes and binds acetylated RELA, leading to further recruitment of the P-TEFb complex and subsequent activation of NF-kappa-B. Also acts as a regulator of p53/TP53-mediated transcription: following phosphorylation by CK2, recruited to p53/TP53 specific target promoters. Its function is as follows. Acts as a chromatin insulator in the DNA damage response pathway. Inhibits DNA damage response signaling by recruiting the condensin-2 complex to acetylated histones, leading to chromatin structure remodeling, insulating the region from DNA damage response by limiting spreading of histone H2AX/H2A.x phosphorylation. The polypeptide is Bromodomain-containing protein 4 (BRD4) (Homo sapiens (Human)).